A 276-amino-acid polypeptide reads, in one-letter code: Large ribosomal subunit protein uL2 (276 aa).

A disordered region spans residues 219-276 (TVRGSVMNPNDHPHGGGEGRAPIGRKSPMSPWGKPTLGYKTRQRNKPSDKYIVRKRKK).

This sequence belongs to the universal ribosomal protein uL2 family. As to quaternary structure, part of the 50S ribosomal subunit. Forms a bridge to the 30S subunit in the 70S ribosome.

Its function is as follows. One of the primary rRNA binding proteins. Required for association of the 30S and 50S subunits to form the 70S ribosome, for tRNA binding and peptide bond formation. It has been suggested to have peptidyltransferase activity; this is somewhat controversial. Makes several contacts with the 16S rRNA in the 70S ribosome. This chain is Large ribosomal subunit protein uL2, found in Oceanobacillus iheyensis (strain DSM 14371 / CIP 107618 / JCM 11309 / KCTC 3954 / HTE831).